The sequence spans 1010 residues: Lysosomal alpha-mannosidase (1010 aa).

The signal sequence occupies residues 1–22 (MVIKKLFILIFCLFLIINEING). Positions 23–40 (KKTKINDIKKSKPKLSST) are cleaved as a propeptide — pro I. Zn(2+) is bound by residues H51 and D53. N-linked (GlcNAc...) asparagine glycosylation occurs at N68. The Zn(2+) site is built by D173 and H420. Catalysis depends on D173, which acts as the Nucleophile. N-linked (GlcNAc...) asparagine glycosylation is found at N480, N520, N528, N539, N623, N760, N784, N828, N954, and N963. A propeptide spans 508–595 (RNEPVRIPIP…GGGKINEKVS (88 aa)) (pro II).

It belongs to the glycosyl hydrolase 38 family. In terms of assembly, tetramer of equimolar amounts of 60 and 58 kDa subunits. It depends on Zn(2+) as a cofactor. In terms of processing, first cleaved into the mature 58 kDa subunit and an intermediate 82 kDa subunit. The latter is then cleaved to its mature 60 kDa subunit form. These events occur in multiple intracellular compartments. The 60 kDa subunit may form one or more intramolecular disulfide bonds.

The protein localises to the lysosome. It carries out the reaction Hydrolysis of terminal, non-reducing alpha-D-mannose residues in alpha-D-mannosides.. The polypeptide is Lysosomal alpha-mannosidase (manA) (Dictyostelium discoideum (Social amoeba)).